The following is a 347-amino-acid chain: Glycerol-3-phosphate dehydrogenase [NAD(P)+] (347 aa).

NADPH is bound by residues tryptophan 20, arginine 39, and lysine 118. Sn-glycerol 3-phosphate is bound by residues lysine 118, glycine 152, and serine 154. Residue alanine 156 coordinates NADPH. The sn-glycerol 3-phosphate site is built by lysine 207, aspartate 260, serine 270, arginine 271, and asparagine 272. Lysine 207 functions as the Proton acceptor in the catalytic mechanism. Arginine 271 contributes to the NADPH binding site. Residues valine 295 and glutamate 297 each contribute to the NADPH site.

Belongs to the NAD-dependent glycerol-3-phosphate dehydrogenase family.

The protein resides in the cytoplasm. The catalysed reaction is sn-glycerol 3-phosphate + NAD(+) = dihydroxyacetone phosphate + NADH + H(+). It catalyses the reaction sn-glycerol 3-phosphate + NADP(+) = dihydroxyacetone phosphate + NADPH + H(+). It participates in membrane lipid metabolism; glycerophospholipid metabolism. Catalyzes the reduction of the glycolytic intermediate dihydroxyacetone phosphate (DHAP) to sn-glycerol 3-phosphate (G3P), the key precursor for phospholipid synthesis. This chain is Glycerol-3-phosphate dehydrogenase [NAD(P)+], found in Cupriavidus pinatubonensis (strain JMP 134 / LMG 1197) (Cupriavidus necator (strain JMP 134)).